A 227-amino-acid polypeptide reads, in one-letter code: Adapter protein MecA 1 (227 aa).

It belongs to the MecA family. In terms of assembly, homodimer.

Enables the recognition and targeting of unfolded and aggregated proteins to the ClpC protease or to other proteins involved in proteolysis. Acts negatively in the development of competence by binding ComK and recruiting it to the ClpCP protease. When overexpressed, inhibits sporulation. Also involved in Spx degradation by ClpC. The chain is Adapter protein MecA 1 (mecA1) from Bacillus cereus (strain ATCC 14579 / DSM 31 / CCUG 7414 / JCM 2152 / NBRC 15305 / NCIMB 9373 / NCTC 2599 / NRRL B-3711).